Reading from the N-terminus, the 627-residue chain is Coiled-coil domain-containing protein 22 (627 aa).

The sufficient for interaction with COMMD1 stretch occupies residues 1-321 (MEEADRILIH…VSDVPATSRR (321 aa)). The tract at residues 1–447 (MEEADRILIH…LQDCRELESS (447 aa)) is sufficicient and required for interaction with CCDC93. The disordered stretch occupies residues 218–243 (TGRDRPGDEDWVHRTSRLPPQEDTRA). Over residues 219 to 230 (GRDRPGDEDWVH) the composition is skewed to basic and acidic residues. The stretch at 320–627 (RRPEQVTWAA…AGLLGRVREA (308 aa)) forms a coiled coil. Phosphoserine is present on Ser410.

Belongs to the CCDC22 family. In terms of assembly, component of the commander complex consisting of the CCC subcomplex and the retriever subcomplex. Component of the CCC (COMMD/CCDC22/CCDC93) subcomplex consisting of COMMD1, COMMD2, COMMD3, COMMD4, COMMD5, COMMD6, COMMD7, COMMD8, COMMD9, COMMD10, CCDC22 and CCDC93. Forms a coiled-coil heterodimer with CCDC22; this heterodimer interacts with the guanine nucleotide exchange factor DENND10; the interaction is direct. Interacts with CUL1, CUL2, CUL3, SKP1, BTRC. Interacts with SNX17 and SNX31. Interacts with CPNE1 and CPNE4. In terms of tissue distribution, widely expressed in adult tissues and in fetal liver and brain, with highest levels in prostate and lowest in skeletal muscle.

Its subcellular location is the endosome. It is found in the cytoplasm. The protein resides in the cytoskeleton. It localises to the microtubule organizing center. The protein localises to the centrosome. Functionally, component of the commander complex that is essential for endosomal recycling of transmembrane cargos; the Commander complex is composed of composed of the CCC subcomplex and the retriever subcomplex. Component of the CCC complex, which is involved in the regulation of endosomal recycling of surface proteins, including integrins, signaling receptor and channels. Involved in regulation of NF-kappa-B signaling. Promotes ubiquitination of I-kappa-B-kinase subunit IKBKB and its subsequent proteasomal degradation leading to NF-kappa-B activation; the function may involve association with COMMD8 and a CUL1-dependent E3 ubiquitin ligase complex. May down-regulate NF-kappa-B activity via association with COMMD1 and involving a CUL2-dependent E3 ubiquitin ligase complex. Regulates the cellular localization of COMM domain-containing proteins, such as COMMD1 and COMMD10. Component of the CCC complex, which is involved in the regulation of endosomal recycling of surface proteins, including integrins, signaling receptor and channels. The CCC complex associates with SNX17, retriever and WASH complexes to prevent lysosomal degradation and promote cell surface recycling of numerous cargos such as integrins ITGA5:ITGB1. Plays a role in copper ion homeostasis. Involved in copper-dependent ATP7A trafficking between the trans-Golgi network and vesicles in the cell periphery; the function is proposed to depend on its association within the CCC complex and cooperation with the WASH complex on early endosomes. Its function is as follows. (Microbial infection) The CCC complex, in collaboration with the heterotrimeric retriever complex, mediates the exit of human papillomavirus to the cell surface. The protein is Coiled-coil domain-containing protein 22 (CCDC22) of Homo sapiens (Human).